The sequence spans 488 residues: 3-octaprenyl-4-hydroxybenzoate carboxy-lyase (488 aa).

Asn172 serves as a coordination point for Mn(2+). Residues 175–177 (IYR), 189–191 (RWL), and 194–195 (RG) each bind prenylated FMN. A Mn(2+)-binding site is contributed by Glu238. The Proton donor role is filled by Asp287.

This sequence belongs to the UbiD family. Homohexamer. It depends on prenylated FMN as a cofactor. The cofactor is Mn(2+).

Its subcellular location is the cell membrane. It carries out the reaction a 4-hydroxy-3-(all-trans-polyprenyl)benzoate + H(+) = a 2-(all-trans-polyprenyl)phenol + CO2. Its pathway is cofactor biosynthesis; ubiquinone biosynthesis. Functionally, catalyzes the decarboxylation of 3-octaprenyl-4-hydroxy benzoate to 2-octaprenylphenol, an intermediate step in ubiquinone biosynthesis. The sequence is that of 3-octaprenyl-4-hydroxybenzoate carboxy-lyase from Pseudoalteromonas translucida (strain TAC 125).